We begin with the raw amino-acid sequence, 80 residues long: MPKKNEAPASFETALSELEQIVTRLESGDLPLEEALNEFERGVQLARQGQAKLQQAEQRVQILLSDNEDASPEPFTPDNE.

Belongs to the XseB family. Heterooligomer composed of large and small subunits.

The protein resides in the cytoplasm. It carries out the reaction Exonucleolytic cleavage in either 5'- to 3'- or 3'- to 5'-direction to yield nucleoside 5'-phosphates.. Its function is as follows. Bidirectionally degrades single-stranded DNA into large acid-insoluble oligonucleotides, which are then degraded further into small acid-soluble oligonucleotides. This chain is Exodeoxyribonuclease 7 small subunit, found in Citrobacter koseri (strain ATCC BAA-895 / CDC 4225-83 / SGSC4696).